A 295-amino-acid chain; its full sequence is Indole-3-glycerol phosphate synthase (295 aa).

This sequence belongs to the TrpC family.

The enzyme catalyses 1-(2-carboxyphenylamino)-1-deoxy-D-ribulose 5-phosphate + H(+) = (1S,2R)-1-C-(indol-3-yl)glycerol 3-phosphate + CO2 + H2O. It functions in the pathway amino-acid biosynthesis; L-tryptophan biosynthesis; L-tryptophan from chorismate: step 4/5. The polypeptide is Indole-3-glycerol phosphate synthase (Prochlorococcus marinus (strain AS9601)).